We begin with the raw amino-acid sequence, 69 residues long: Cecropin-like peptide 1 (69 aa).

Residues 1 to 23 form the signal peptide; it reads MNFTKLFVVFAVVLVAFAGQSEA. A Glutamine amide modification is found at glutamine 68.

Following bacterial infection, expressed in fat body, trachea and muscle.

Its subcellular location is the secreted. Antimicrobial peptide active against Gram-negative bacteria E.coli KCCM 11234 (MIC&lt;=1.03 uM), E.aerogenes KCCM 12177 (MIC&lt;=2.07 uM) and P.aeruginosa KCCM 11328 (MIC&lt;=2.07 uM). Not active against various Gram-positive bacteria at concentrations up to 4.14 uM. The sequence is that of Cecropin-like peptide 1 from Hermetia illucens (Black soldier fly).